Consider the following 480-residue polypeptide: Ciliated left-right organizer protein containing ZP-N domains homolog (480 aa).

The signal sequence occupies residues 1-23 (MKNQHNTFWVLCLLFVMFDETFS).

As to expression, expressed specifically by cells of the ciliated left-right organizer.

The protein localises to the secreted. In Xenopus tropicalis (Western clawed frog), this protein is Ciliated left-right organizer protein containing ZP-N domains homolog.